The sequence spans 181 residues: Adenine phosphoribosyltransferase (181 aa).

It belongs to the purine/pyrimidine phosphoribosyltransferase family. As to quaternary structure, homodimer.

It localises to the cytoplasm. It catalyses the reaction AMP + diphosphate = 5-phospho-alpha-D-ribose 1-diphosphate + adenine. Its pathway is purine metabolism; AMP biosynthesis via salvage pathway; AMP from adenine: step 1/1. Its function is as follows. Catalyzes a salvage reaction resulting in the formation of AMP, that is energically less costly than de novo synthesis. This chain is Adenine phosphoribosyltransferase, found in Shewanella loihica (strain ATCC BAA-1088 / PV-4).